Here is a 91-residue protein sequence, read N- to C-terminus: MEKLRMNVQGRVQGVGFRYMTKMVADQLGVTGSVRNEDDGSVSITAIAPEDIMETFIKKIKDSPSPAGRVTYVDIQEDPLLEETEQFKVIQ.

Residues 3–91 enclose the Acylphosphatase-like domain; the sequence is KLRMNVQGRV…EETEQFKVIQ (89 aa). Residues Arg-18 and Asn-36 contribute to the active site.

The protein belongs to the acylphosphatase family.

The catalysed reaction is an acyl phosphate + H2O = a carboxylate + phosphate + H(+). In Enterococcus faecalis (strain ATCC 700802 / V583), this protein is Acylphosphatase (acyP).